The sequence spans 255 residues: Arginine-binding extracellular protein ArtP (255 aa).

An N-terminal signal peptide occupies residues 1–19 (MKKWLLLLVAACITFALTA). A lipid anchor (N-palmitoyl cysteine) is attached at C20. A lipid anchor (S-diacylglycerol cysteine) is attached at C20.

Belongs to the bacterial solute-binding protein 3 family.

It is found in the cell membrane. Part of a binding-protein-dependent transport system for arginine. The sequence is that of Arginine-binding extracellular protein ArtP (artP) from Bacillus subtilis (strain 168).